A 53-amino-acid chain; its full sequence is ATP synthase protein 8 (53 aa).

Residues 4 to 24 (MAPISWLLLFIIFSITFILFC) traverse the membrane as a helical segment.

Belongs to the ATPase protein 8 family. In terms of assembly, F-type ATPases have 2 components, CF(1) - the catalytic core - and CF(0) - the membrane proton channel.

The protein resides in the mitochondrion membrane. In terms of biological role, mitochondrial membrane ATP synthase (F(1)F(0) ATP synthase or Complex V) produces ATP from ADP in the presence of a proton gradient across the membrane which is generated by electron transport complexes of the respiratory chain. F-type ATPases consist of two structural domains, F(1) - containing the extramembraneous catalytic core and F(0) - containing the membrane proton channel, linked together by a central stalk and a peripheral stalk. During catalysis, ATP synthesis in the catalytic domain of F(1) is coupled via a rotary mechanism of the central stalk subunits to proton translocation. Part of the complex F(0) domain. Minor subunit located with subunit a in the membrane. This is ATP synthase protein 8 (mt:ATPase8) from Drosophila sechellia (Fruit fly).